Reading from the N-terminus, the 251-residue chain is NADPH-dependent oxidoreductase (251 aa).

It belongs to the flavin oxidoreductase frp family. The cofactor is FMN.

Functionally, reduces FMN, organic nitro compounds and disulfide DTNB. Involved in maintenance of the cellular redox state and the disulfide stress response. The protein is NADPH-dependent oxidoreductase (nfrA) of Staphylococcus epidermidis (strain ATCC 35984 / DSM 28319 / BCRC 17069 / CCUG 31568 / BM 3577 / RP62A).